Here is a 689-residue protein sequence, read N- to C-terminus: MTDKTFLVEIGTEELPPKALRNLAESFAANFTAELDAANLAHGDVSWFAAPRRLALKVARLSASQPDREVEKRGPAISQAFDAEGKPTKAAEGWARGCGITVEQAERLTTDKGEWLLYRAHAKGEQAQALLAGMVSTALSKLPIPKLMRWSDKETQFVRPVHTVTLLLGEELIPGQVLGIHSARTIRGHRFMGEAEFTIDNAEQYPQILLERGKVVADYDARKAKIKADAEDAARKIGGNADLSDSLLEEVTSLVEWPVVLTAKFEEKFLAVPSEALVYTMKGDQKYFPVYDNSGNLLPHFIFVANIESKDPQQIISGNEKVVRPRLADAEFFFNTDRKKRLEDHLPRLETVLFQQQLGSLRDKTDRIQALAGWVASQIGADVNHATRAGLLSKCDLMTNMVFEFTDTQGVMGMHYARHDGEAEDVAVALNEQYQPRFAGDELPSSAVACALAIADKMDSLAGIFGIGQHPKGDKDPFALRRAALGVLRIIVEKRLPLDLQTLTEEAVRLYGTKLTNTKAVDEVIEFMLGRFRAWYQEEGHSVDTIQAVLARRPTRPADFDARVKAVSHFRSLDAAAALAAANKRVSNILAKSTDKLNESVNAAVLKDAAEITLATHLVVLRDKLTPLFAEGRYQEALVELASLREPVDAFFDQVMVMAEDEQVRVNRLTLLSQLRELFLQVADISVLQ.

The protein belongs to the class-II aminoacyl-tRNA synthetase family. In terms of assembly, tetramer of two alpha and two beta subunits.

It is found in the cytoplasm. It carries out the reaction tRNA(Gly) + glycine + ATP = glycyl-tRNA(Gly) + AMP + diphosphate. The sequence is that of Glycine--tRNA ligase beta subunit from Pectobacterium atrosepticum (strain SCRI 1043 / ATCC BAA-672) (Erwinia carotovora subsp. atroseptica).